Reading from the N-terminus, the 46-residue chain is uncharacterized protein (46 aa).

This is an uncharacterized protein from Escherichia coli (Bacteriophage T4).